The chain runs to 75 residues: Small ribosomal subunit protein bS18 (75 aa).

Belongs to the bacterial ribosomal protein bS18 family. As to quaternary structure, part of the 30S ribosomal subunit. Forms a tight heterodimer with protein bS6.

In terms of biological role, binds as a heterodimer with protein bS6 to the central domain of the 16S rRNA, where it helps stabilize the platform of the 30S subunit. The sequence is that of Small ribosomal subunit protein bS18 from Buchnera aphidicola subsp. Acyrthosiphon pisum (strain 5A).